We begin with the raw amino-acid sequence, 1125 residues long: RGS domain-containing serine/threonine-protein kinase A (1125 aa).

Disordered regions lie at residues 1 to 77 (MKTS…GGNK), 96 to 191 (RRNS…IVDD), 276 to 416 (GISP…NNTN), and 455 to 480 (YVGGNKGSEDRRKKIEQKKKQVPAPE). Composition is skewed to low complexity over residues 7–30 (SSNSNSNNNNNNNNNNNNNNNNNN) and 37–66 (SSKSLSPPTSPKQMSGNSIISNSTGNLSSG). The span at 121–136 (LDSKPPKPFDEKDDPI) shows a compositional bias: basic and acidic residues. Composition is skewed to low complexity over residues 159–191 (QPQQTQQQSSGENLNNSSDRNNNSNENNQIVDD) and 281–342 (NNNN…LNNS). A compositionally biased stretch (polar residues) spans 343–361 (PRYLNSSSSPRSMQHLSSK). The segment covering 362 to 416 (ITTTTTTTTTTTTTTSDDNNGNTNNNISNNNNIINNSNNNSNSNNNNNNNINNTN) has biased composition (low complexity). Positions 487–603 (KFIETITDPT…ISSPFNPEWK (117 aa)) constitute an RGS domain. A compositionally biased stretch (low complexity) spans 617 to 685 (TTTQPINNFN…NNSNGSNTSS (69 aa)). Disordered regions lie at residues 617-710 (TTTQ…KERS) and 723-762 (NLSNHSNSSSNSNGKDKDKDKDKNENTTDNSNNNNNSNNN). Basic and acidic residues predominate over residues 690–710 (ERLDNIKGNRERVDSNGKERS). Positions 723–735 (NLSNHSNSSSNSN) are enriched in low complexity. The span at 736 to 748 (GKDKDKDKDKNEN) shows a compositional bias: basic and acidic residues. Positions 749–762 (TTDNSNNNNNSNNN) are enriched in low complexity. A Protein kinase domain is found at 842–1097 (VSIHKWIASG…YLESIIYPSV (256 aa)). ATP-binding positions include 848–856 (IASGSSGRV) and lysine 869. Aspartate 963 acts as the Proton acceptor in catalysis.

Belongs to the protein kinase superfamily. TKL Ser/Thr protein kinase family. Post-translationally, autophosphorylated.

Its subcellular location is the cytoplasm. It is found in the cell membrane. The catalysed reaction is L-seryl-[protein] + ATP = O-phospho-L-seryl-[protein] + ADP + H(+). It carries out the reaction L-threonyl-[protein] + ATP = O-phospho-L-threonyl-[protein] + ADP + H(+). Up-regulated by cAMP. In terms of biological role, serine/threonine kinase involved in negative regulation of chemotaxis. This is RGS domain-containing serine/threonine-protein kinase A (rckA) from Dictyostelium discoideum (Social amoeba).